The primary structure comprises 198 residues: Leucine-rich melanocyte differentiation-associated protein (198 aa).

LRR repeat units lie at residues 2-22 (EKYL…EGLS), 26-47 (SLEE…PGLP), 48-69 (RLHT…LDHL), and 75-95 (ALEY…VSLE). Positions 96 to 134 (KDEEDYKRYRCFVLYKLPNLKFLDAQKVTRQEREEALVR) constitute an LRRCT domain.

In the embryo, expressed in melanoblasts. In the fetus, expressed in melanocytes. Not detected in retinal pigment epithelial cells.

In terms of biological role, required for melanocyte differentiation. This is Leucine-rich melanocyte differentiation-associated protein from Homo sapiens (Human).